The following is a 289-amino-acid chain: Polyamine aminopropyltransferase (289 aa).

Residues 5-238 (TVWHETLHDQ…GIMTFAWATD (234 aa)) enclose the PABS domain. Gln33 contributes to the S-methyl-5'-thioadenosine binding site. Positions 64 and 88 each coordinate spermidine. Residues Glu108 and 140 to 141 (DG) each bind S-methyl-5'-thioadenosine. The active-site Proton acceptor is Asp158. 158–161 (DCTD) is a spermidine binding site. An S-methyl-5'-thioadenosine-binding site is contributed by Pro165.

It belongs to the spermidine/spermine synthase family. In terms of assembly, homodimer or homotetramer.

It localises to the cytoplasm. The catalysed reaction is S-adenosyl 3-(methylsulfanyl)propylamine + putrescine = S-methyl-5'-thioadenosine + spermidine + H(+). The protein operates within amine and polyamine biosynthesis; spermidine biosynthesis; spermidine from putrescine: step 1/1. Catalyzes the irreversible transfer of a propylamine group from the amino donor S-adenosylmethioninamine (decarboxy-AdoMet) to putrescine (1,4-diaminobutane) to yield spermidine. The protein is Polyamine aminopropyltransferase of Enterobacter sp. (strain 638).